The sequence spans 332 residues: Ferredoxin--NADP reductase (332 aa).

Residues glutamate 36, glutamine 44, tyrosine 49, valine 91, phenylalanine 124, and threonine 327 each contribute to the FAD site.

This sequence belongs to the ferredoxin--NADP reductase type 2 family. As to quaternary structure, homodimer. It depends on FAD as a cofactor.

It catalyses the reaction 2 reduced [2Fe-2S]-[ferredoxin] + NADP(+) + H(+) = 2 oxidized [2Fe-2S]-[ferredoxin] + NADPH. The chain is Ferredoxin--NADP reductase from Streptococcus thermophilus (strain CNRZ 1066).